The sequence spans 420 residues: uncharacterized protein (420 aa).

Residues 43-215 (NLCLVLDHSG…HTFRQLFQRM (173 aa)) enclose the VWFA domain. The interval 389–420 (LQSGEDLSEGDRKKTRMVSKTTLQPPSAPSEH) is disordered.

This is an uncharacterized protein from Synechocystis sp. (strain ATCC 27184 / PCC 6803 / Kazusa).